The chain runs to 218 residues: uncharacterized protein (218 aa).

This is an uncharacterized protein from Acholeplasma phage L2 (Bacteriophage L2).